Consider the following 432-residue polypeptide: Enolase (432 aa).

Gln-163 provides a ligand contact to (2R)-2-phosphoglycerate. Catalysis depends on Glu-205, which acts as the Proton donor. Mg(2+)-binding residues include Asp-242, Glu-288, and Asp-315. The (2R)-2-phosphoglycerate site is built by Lys-340, Arg-369, Ser-370, and Lys-391. Lys-340 acts as the Proton acceptor in catalysis.

It belongs to the enolase family. Mg(2+) serves as cofactor.

The protein localises to the cytoplasm. It is found in the secreted. It localises to the cell surface. The enzyme catalyses (2R)-2-phosphoglycerate = phosphoenolpyruvate + H2O. The protein operates within carbohydrate degradation; glycolysis; pyruvate from D-glyceraldehyde 3-phosphate: step 4/5. Functionally, catalyzes the reversible conversion of 2-phosphoglycerate (2-PG) into phosphoenolpyruvate (PEP). It is essential for the degradation of carbohydrates via glycolysis. The chain is Enolase from Enterococcus faecalis (strain ATCC 700802 / V583).